The chain runs to 478 residues: Transcript termination protein A18 (478 aa).

One can recognise a Helicase ATP-binding domain in the interval 98–254 (KVELKRPMYV…NDVINVSNSS (157 aa)). Residue 111–118 (LACGFGKT) coordinates ATP. The DESH box motif lies at 204–207 (DESH). The 148-residue stretch at 307–454 (ILDTIIYDFE…IITLAIEKLG (148 aa)) folds into the Helicase C-terminal domain.

Belongs to the helicase family. Poxviruses subfamily. Interacts with G2. Might be part of a transcription complex composed at least of G2, A18, and H5.

The protein localises to the virion. In terms of biological role, DNA helicase which seems to act as a postreplicative transcription termination factor. Involved in ATP-dependent release of nascent RNA. Forms a stable complex with single-stranded DNA, and to a lesser extent RNA. This Erythrocebus patas (Red guenon) protein is Transcript termination protein A18.